We begin with the raw amino-acid sequence, 102 residues long: Large ribosomal subunit protein bL21 (102 aa).

The protein belongs to the bacterial ribosomal protein bL21 family. As to quaternary structure, part of the 50S ribosomal subunit. Contacts protein L20.

This protein binds to 23S rRNA in the presence of protein L20. The polypeptide is Large ribosomal subunit protein bL21 (Campylobacter jejuni subsp. jejuni serotype O:6 (strain 81116 / NCTC 11828)).